We begin with the raw amino-acid sequence, 123 residues long: Protein Wnt-3b (123 aa).

Ser-1 carries the O-palmitoleoyl serine; by PORCN lipid modification. An intrachain disulfide couples Cys-89 to Cys-104. Asn-90 carries N-linked (GlcNAc...) asparagine glycosylation.

The protein belongs to the Wnt family. In terms of processing, palmitoleoylation is required for efficient binding to frizzled receptors. Depalmitoleoylation leads to Wnt signaling pathway inhibition.

It is found in the secreted. The protein resides in the extracellular space. Its subcellular location is the extracellular matrix. Its function is as follows. Ligand for members of the frizzled family of seven transmembrane receptors. Probable developmental protein. May be a signaling molecule which affects the development of discrete regions of tissues. Is likely to signal over only few cell diameters. The protein is Protein Wnt-3b (WNT-3B) of Plethodon jordani (Red-cheeked salamander).